The chain runs to 206 residues: LexA repressor (206 aa).

Residues 27 to 47 (YEEIRQNLGFRSLNAVFKHLK) constitute a DNA-binding region (H-T-H motif). Catalysis depends on for autocatalytic cleavage activity residues S120 and K157.

It belongs to the peptidase S24 family. Homodimer.

The catalysed reaction is Hydrolysis of Ala-|-Gly bond in repressor LexA.. Represses a number of genes involved in the response to DNA damage (SOS response), including recA and lexA. In the presence of single-stranded DNA, RecA interacts with LexA causing an autocatalytic cleavage which disrupts the DNA-binding part of LexA, leading to derepression of the SOS regulon and eventually DNA repair. The chain is LexA repressor from Syntrophobacter fumaroxidans (strain DSM 10017 / MPOB).